The following is a 200-amino-acid chain: ATP-dependent Clp protease proteolytic subunit 2 (200 aa).

The active-site Nucleophile is S99. Residue H123 is part of the active site.

This sequence belongs to the peptidase S14 family. As to quaternary structure, fourteen ClpP subunits assemble into 2 heptameric rings which stack back to back to give a disk-like structure with a central cavity, resembling the structure of eukaryotic proteasomes.

Its subcellular location is the cytoplasm. It carries out the reaction Hydrolysis of proteins to small peptides in the presence of ATP and magnesium. alpha-casein is the usual test substrate. In the absence of ATP, only oligopeptides shorter than five residues are hydrolyzed (such as succinyl-Leu-Tyr-|-NHMec, and Leu-Tyr-Leu-|-Tyr-Trp, in which cleavage of the -Tyr-|-Leu- and -Tyr-|-Trp bonds also occurs).. Its function is as follows. Cleaves peptides in various proteins in a process that requires ATP hydrolysis. Has a chymotrypsin-like activity. Plays a major role in the degradation of misfolded proteins. In Symbiobacterium thermophilum (strain DSM 24528 / JCM 14929 / IAM 14863 / T), this protein is ATP-dependent Clp protease proteolytic subunit 2.